The primary structure comprises 280 residues: NAD kinase (280 aa).

The active-site Proton acceptor is Asp60. Residues 60–61, 134–135, Arg145, Asp164, 175–180, and Gln234 contribute to the NAD(+) site; these read DG, ND, and TAYSLS.

It belongs to the NAD kinase family. Requires a divalent metal cation as cofactor.

The protein localises to the cytoplasm. The catalysed reaction is NAD(+) + ATP = ADP + NADP(+) + H(+). Involved in the regulation of the intracellular balance of NAD and NADP, and is a key enzyme in the biosynthesis of NADP. Catalyzes specifically the phosphorylation on 2'-hydroxyl of the adenosine moiety of NAD to yield NADP. This is NAD kinase from Carboxydothermus hydrogenoformans (strain ATCC BAA-161 / DSM 6008 / Z-2901).